Here is a 747-residue protein sequence, read N- to C-terminus: DNA ligase (747 aa).

Residues 33–37, 83–84, and Glu-113 contribute to the NAD(+) site; these read DEEYD and SL. The active-site N6-AMP-lysine intermediate is Lys-115. NAD(+) is bound by residues Arg-136, Glu-174, Lys-299, and Lys-323. 4 residues coordinate Zn(2+): Cys-417, Cys-420, Cys-436, and Cys-442. The 89-residue stretch at 659 to 747 folds into the BRCT domain; that stretch reads TGGGVLSGLT…GPGALPEVAE (89 aa).

This sequence belongs to the NAD-dependent DNA ligase family. LigA subfamily. Mg(2+) serves as cofactor. Requires Mn(2+) as cofactor.

The enzyme catalyses NAD(+) + (deoxyribonucleotide)n-3'-hydroxyl + 5'-phospho-(deoxyribonucleotide)m = (deoxyribonucleotide)n+m + AMP + beta-nicotinamide D-nucleotide.. DNA ligase that catalyzes the formation of phosphodiester linkages between 5'-phosphoryl and 3'-hydroxyl groups in double-stranded DNA using NAD as a coenzyme and as the energy source for the reaction. It is essential for DNA replication and repair of damaged DNA. The polypeptide is DNA ligase (Leifsonia xyli subsp. xyli (strain CTCB07)).